The primary structure comprises 610 residues: Glutamine--fructose-6-phosphate aminotransferase [isomerizing] (610 aa).

Cysteine 2 acts as the Nucleophile; for GATase activity in catalysis. Residues 2–219 enclose the Glutamine amidotransferase type-2 domain; the sequence is CGIVGAVAQR…EGDVAEITRR (218 aa). 2 SIS domains span residues 287 to 427 and 459 to 600; these read ADEL…LRGM and LAEG…VDQP. The active-site For Fru-6P isomerization activity is lysine 605.

Homodimer.

The protein resides in the cytoplasm. It catalyses the reaction D-fructose 6-phosphate + L-glutamine = D-glucosamine 6-phosphate + L-glutamate. In terms of biological role, catalyzes the first step in hexosamine metabolism, converting fructose-6P into glucosamine-6P using glutamine as a nitrogen source. The sequence is that of Glutamine--fructose-6-phosphate aminotransferase [isomerizing] from Pectobacterium atrosepticum (strain SCRI 1043 / ATCC BAA-672) (Erwinia carotovora subsp. atroseptica).